Here is a 155-residue protein sequence, read N- to C-terminus: Fibroblast growth factor 1 (155 aa).

At A2 the chain carries N-acetylalanine. Positions 2–15 are excised as a propeptide; it reads AEGEITTFSALTER. Residue N33 coordinates heparin. The interval 127–143 is heparin-binding; sequence KKNGSCKRGPRTHYGQK.

The protein belongs to the heparin-binding growth factors family. In terms of assembly, monomer. Homodimer. Interacts with FGFR1, FGFR2, FGFR3 and FGFR4. Affinity between fibroblast growth factors (FGFs) and their receptors is increased by heparan sulfate glycosaminoglycans that function as coreceptors. Found in a complex with FGFBP1, FGF1 and FGF2. Interacts with FGFBP1. Part of a Cu(2+)-dependent multiprotein aggregate containing FGF1, S100A13 and SYT1. Interacts with SYT1. Interacts with S100A13. Interacts with LRRC59. Interacts with CSNKA, CSNKB and FIBP. While binding with LRRC59, CSNKA and FIBP seem mutually exclusive, CSNKB and FIBP may cooperatively interact with FGF1. Forms a ternary complex with FGFR1 and ITGAV:ITGB3 and induces the recruitment of PTPN11 to the complex. Post-translationally, in the nucleus, phosphorylated by PKC/PRKCD.

The protein localises to the secreted. It localises to the cytoplasm. The protein resides in the cell cortex. Its subcellular location is the cytosol. It is found in the nucleus. Plays an important role in the regulation of cell survival, cell division, angiogenesis, cell differentiation and cell migration. Functions as a potent mitogen in vitro. Acts as a ligand for FGFR1 and integrins. Binds to FGFR1 in the presence of heparin leading to FGFR1 dimerization and activation via sequential autophosphorylation on tyrosine residues which act as docking sites for interacting proteins, leading to the activation of several signaling cascades. Binds to integrin ITGAV:ITGB3. Its binding to integrin, subsequent ternary complex formation with integrin and FGFR1, and the recruitment of PTPN11 to the complex are essential for FGF1 signaling. Induces the phosphorylation and activation of FGFR1, FRS2, MAPK3/ERK1, MAPK1/ERK2 and AKT1. Can induce angiogenesis. This chain is Fibroblast growth factor 1 (FGF1), found in Mesocricetus auratus (Golden hamster).